Here is a 507-residue protein sequence, read N- to C-terminus: ATP synthase subunit alpha, chloroplastic (507 aa).

Residue 169-176 coordinates ATP; sequence IGDRQTGK.

This sequence belongs to the ATPase alpha/beta chains family. In terms of assembly, F-type ATPases have 2 components, CF(1) - the catalytic core - and CF(0) - the membrane proton channel. CF(1) has five subunits: alpha(3), beta(3), gamma(1), delta(1), epsilon(1). CF(0) has four main subunits: a, b, b' and c.

The protein resides in the plastid. The protein localises to the chloroplast thylakoid membrane. It catalyses the reaction ATP + H2O + 4 H(+)(in) = ADP + phosphate + 5 H(+)(out). In terms of biological role, produces ATP from ADP in the presence of a proton gradient across the membrane. The alpha chain is a regulatory subunit. The polypeptide is ATP synthase subunit alpha, chloroplastic (Saccharum hybrid (Sugarcane)).